The sequence spans 108 residues: UPF0145 protein SYNPCC7002_A1337 (108 aa).

This sequence belongs to the UPF0145 family.

This Picosynechococcus sp. (strain ATCC 27264 / PCC 7002 / PR-6) (Agmenellum quadruplicatum) protein is UPF0145 protein SYNPCC7002_A1337.